A 336-amino-acid chain; its full sequence is Casein kinase I isoform beta (336 aa).

One can recognise a Protein kinase domain in the interval 17–285; it reads YKLVREIGFG…YLRQLFRLLF (269 aa). ATP is bound by residues 23–31 and Lys46; that span reads IGFGSFGHV. Asp136 acts as the Proton acceptor in catalysis. Residues 309–320 are compositionally biased toward low complexity; the sequence is ASSSSGEGQQAQ. Positions 309–336 are disordered; sequence ASSSSGEGQQAQTPTGKSDNTKSEMKHS. Positions 327–336 are enriched in basic and acidic residues; that stretch reads DNTKSEMKHS.

Belongs to the protein kinase superfamily. CK1 Ser/Thr protein kinase family. Casein kinase I subfamily. Monomer.

It localises to the cytoplasm. It catalyses the reaction L-seryl-[protein] + ATP = O-phospho-L-seryl-[protein] + ADP + H(+). The enzyme catalyses L-threonyl-[protein] + ATP = O-phospho-L-threonyl-[protein] + ADP + H(+). Casein kinases are operationally defined by their preferential utilization of acidic proteins such as caseins as substrates. It can phosphorylate a large number of proteins. Participates in Wnt signaling. The polypeptide is Casein kinase I isoform beta (CSNK1B) (Bos taurus (Bovine)).